The following is a 438-amino-acid chain: Argininosuccinate lyase (438 aa).

Belongs to the lyase 1 family. Argininosuccinate lyase subfamily.

It is found in the cytoplasm. The catalysed reaction is 2-(N(omega)-L-arginino)succinate = fumarate + L-arginine. Its pathway is amino-acid biosynthesis; L-arginine biosynthesis; L-arginine from L-ornithine and carbamoyl phosphate: step 3/3. This chain is Argininosuccinate lyase, found in Clostridioides difficile (strain 630) (Peptoclostridium difficile).